Consider the following 161-residue polypeptide: Globin CTT-VIIB-3 (161 aa).

Positions 1–16 are cleaved as a signal peptide; the sequence is MKFFAVLALCIVGAIA. The 144-residue stretch at 18 to 161 folds into the Globin domain; it reads PLTADEASLV…NTYAIVVPRL (144 aa). Residues histidine 76 and histidine 111 each contribute to the heme b site.

This sequence belongs to the globin family. As to quaternary structure, homodimer.

This Chironomus thummi thummi (Midge) protein is Globin CTT-VIIB-3 (CTT-7B3).